The primary structure comprises 196 residues: Large ribosomal subunit protein uL5 (196 aa).

It belongs to the universal ribosomal protein uL5 family. In terms of assembly, part of the 50S ribosomal subunit; part of the 5S rRNA/L5/L18/L25 subcomplex. Contacts the 5S rRNA and the P site tRNA. Forms a bridge to the 30S subunit in the 70S ribosome.

This is one of the proteins that bind and probably mediate the attachment of the 5S RNA into the large ribosomal subunit, where it forms part of the central protuberance. In the 70S ribosome it contacts protein S13 of the 30S subunit (bridge B1b), connecting the 2 subunits; this bridge is implicated in subunit movement. Contacts the P site tRNA; the 5S rRNA and some of its associated proteins might help stabilize positioning of ribosome-bound tRNAs. This chain is Large ribosomal subunit protein uL5, found in Rhodopirellula baltica (strain DSM 10527 / NCIMB 13988 / SH1).